A 356-amino-acid chain; its full sequence is Histidinol-phosphate aminotransferase 2 (356 aa).

Residue Lys214 is modified to N6-(pyridoxal phosphate)lysine.

This sequence belongs to the class-II pyridoxal-phosphate-dependent aminotransferase family. Histidinol-phosphate aminotransferase subfamily. In terms of assembly, homodimer. It depends on pyridoxal 5'-phosphate as a cofactor.

It carries out the reaction L-histidinol phosphate + 2-oxoglutarate = 3-(imidazol-4-yl)-2-oxopropyl phosphate + L-glutamate. It functions in the pathway amino-acid biosynthesis; L-histidine biosynthesis; L-histidine from 5-phospho-alpha-D-ribose 1-diphosphate: step 7/9. The protein is Histidinol-phosphate aminotransferase 2 of Dechloromonas aromatica (strain RCB).